Consider the following 265-residue polypeptide: Novel plant SNARE 12 (265 aa).

The Cytoplasmic segment spans residues 1 to 217 (MASELPMSPH…IGRQVATDKC (217 aa)). A coiled-coil region spans residues 32–106 (LDKIKDSSRQ…ALRKTYLNTL (75 aa)). Ser-74 is subject to Phosphoserine. In terms of domain architecture, t-SNARE coiled-coil homology spans 146–208 (MKRMDETDQA…KKASQLVKEI (63 aa)). The helical; Anchor for type IV membrane protein transmembrane segment at 218–238 (IMAFLFLIVCGVIAIIIVKIV) threads the bilayer. Topologically, residues 239–265 (NPNNKDIRDIPGLAPPAQSRKLLYFRE) are vesicular.

It belongs to the novel plant SNARE family. As to expression, expressed in roots, stems, flower, siliques and leaves.

It is found in the membrane. Its function is as follows. Vesicle trafficking protein that functions in the secretory pathway. The polypeptide is Novel plant SNARE 12 (NPSN12) (Arabidopsis thaliana (Mouse-ear cress)).